A 180-amino-acid chain; its full sequence is UPF0227 protein VV2369 (180 aa).

The protein belongs to the UPF0227 family.

This chain is UPF0227 protein VV2369, found in Vibrio vulnificus (strain YJ016).